Consider the following 100-residue polypeptide: Small ribosomal subunit protein uS14c (100 aa).

Belongs to the universal ribosomal protein uS14 family. Part of the 30S ribosomal subunit.

The protein localises to the plastid. The protein resides in the chloroplast. Binds 16S rRNA, required for the assembly of 30S particles. This chain is Small ribosomal subunit protein uS14c, found in Ostreococcus tauri.